We begin with the raw amino-acid sequence, 290 residues long: Pyridoxal kinase PdxY (290 aa).

S14 is a binding site for substrate. 2 residues coordinate ATP: D116 and E153. D226 serves as a coordination point for substrate.

Belongs to the pyridoxine kinase family. PdxY subfamily. Homodimer. Mg(2+) serves as cofactor.

The enzyme catalyses pyridoxal + ATP = pyridoxal 5'-phosphate + ADP + H(+). It functions in the pathway cofactor metabolism; pyridoxal 5'-phosphate salvage; pyridoxal 5'-phosphate from pyridoxal: step 1/1. Functionally, pyridoxal kinase involved in the salvage pathway of pyridoxal 5'-phosphate (PLP). Catalyzes the phosphorylation of pyridoxal to PLP. This chain is Pyridoxal kinase PdxY, found in Rubrobacter xylanophilus (strain DSM 9941 / JCM 11954 / NBRC 16129 / PRD-1).